The sequence spans 541 residues: Membrane protein insertase YidC (541 aa).

A helical transmembrane segment spans residues 6–26; sequence SLLVLALIFISFLVYQQWQLD. The segment at 34 to 56 is disordered; it reads EQTTSITATSDVPASSPSNSQAI. A run of 4 helical transmembrane segments spans residues 337–357, 416–436, 454–474, and 495–515; these read FWLL…IICV, LGGC…YWTF, LSAQ…MFLL, and PLVF…YWLV.

This sequence belongs to the OXA1/ALB3/YidC family. Type 1 subfamily. Interacts with the Sec translocase complex via SecD. Specifically interacts with transmembrane segments of nascent integral membrane proteins during membrane integration.

Its subcellular location is the cell inner membrane. Functionally, required for the insertion and/or proper folding and/or complex formation of integral membrane proteins into the membrane. Involved in integration of membrane proteins that insert both dependently and independently of the Sec translocase complex, as well as at least some lipoproteins. Aids folding of multispanning membrane proteins. The chain is Membrane protein insertase YidC from Haemophilus influenzae (strain ATCC 51907 / DSM 11121 / KW20 / Rd).